Reading from the N-terminus, the 153-residue chain is Cytochrome c-type biogenesis protein CcmE (153 aa).

Over 1-8 the chain is Cytoplasmic; the sequence is MTPVQRRR. Residues 9 to 29 traverse the membrane as a helical; Signal-anchor for type II membrane protein segment; it reads LVWVLLALLASGLATALVAMA. The Periplasmic segment spans residues 30-153; it reads LERNIAYLYT…DVPVTAPEVR (124 aa). Heme contacts are provided by histidine 123 and tyrosine 127.

The protein belongs to the CcmE/CycJ family.

The protein resides in the cell inner membrane. In terms of biological role, heme chaperone required for the biogenesis of c-type cytochromes. Transiently binds heme delivered by CcmC and transfers the heme to apo-cytochromes in a process facilitated by CcmF and CcmH. The chain is Cytochrome c-type biogenesis protein CcmE from Stenotrophomonas maltophilia (strain R551-3).